The sequence spans 574 residues: Sulfate adenylyltransferase (574 aa).

An N-terminal region spans residues 1-169; it reads MANPPHGGVL…IEAINKLNHY (169 aa). Residues 170–394 are catalytic; the sequence is DYVALRYTPA…LRESSPPRHT (225 aa). Glutamine 197 is a sulfate binding site. Residues 197 to 200 and 291 to 294 contribute to the ATP site; these read QTRN and GRDH. Catalysis depends on residues threonine 198, arginine 199, and asparagine 200. Sulfate is bound at residue arginine 199. A sulfate-binding site is contributed by alanine 295. Valine 333 lines the ATP pocket. Residues 395-574 form an allosteric regulation domain; adenylyl-sulfate kinase-like region; sequence QGFTIFLTGY…LETEGFFDRS (180 aa). 3'-phosphoadenylyl sulfate is bound by residues 434-437, arginine 451, 477-478, and arginine 516; these read DTVR and IA.

In the N-terminal section; belongs to the sulfate adenylyltransferase family. It in the C-terminal section; belongs to the APS kinase family. As to quaternary structure, homohexamer. Dimer of trimers.

It localises to the cytoplasm. The catalysed reaction is sulfate + ATP + H(+) = adenosine 5'-phosphosulfate + diphosphate. It participates in sulfur metabolism; hydrogen sulfide biosynthesis; sulfite from sulfate: step 1/3. Allosterically inhibited by 3'-phosphoadenosine 5'-phosphosulfate (PAPS). In terms of biological role, catalyzes the first intracellular reaction of sulfate assimilation, forming adenosine-5'-phosphosulfate (APS) from inorganic sulfate and ATP. Plays an important role in sulfate activation as a component of the biosynthesis pathway of sulfur-containing amino acids. The polypeptide is Sulfate adenylyltransferase (Aspergillus fumigatus (strain ATCC MYA-4609 / CBS 101355 / FGSC A1100 / Af293) (Neosartorya fumigata)).